Consider the following 85-residue polypeptide: ATP synthase subunit c (85 aa).

Transmembrane regions (helical) follow at residues 10–30 (IAVG…FAIL) and 53–73 (FIIA…ALLF).

Belongs to the ATPase C chain family. In terms of assembly, F-type ATPases have 2 components, F(1) - the catalytic core - and F(0) - the membrane proton channel. F(1) has five subunits: alpha(3), beta(3), gamma(1), delta(1), epsilon(1). F(0) has three main subunits: a(1), b(2) and c(10-14). The alpha and beta chains form an alternating ring which encloses part of the gamma chain. F(1) is attached to F(0) by a central stalk formed by the gamma and epsilon chains, while a peripheral stalk is formed by the delta and b chains.

The protein resides in the cell inner membrane. In terms of biological role, f(1)F(0) ATP synthase produces ATP from ADP in the presence of a proton or sodium gradient. F-type ATPases consist of two structural domains, F(1) containing the extramembraneous catalytic core and F(0) containing the membrane proton channel, linked together by a central stalk and a peripheral stalk. During catalysis, ATP synthesis in the catalytic domain of F(1) is coupled via a rotary mechanism of the central stalk subunits to proton translocation. Key component of the F(0) channel; it plays a direct role in translocation across the membrane. A homomeric c-ring of between 10-14 subunits forms the central stalk rotor element with the F(1) delta and epsilon subunits. This chain is ATP synthase subunit c, found in Aliivibrio salmonicida (strain LFI1238) (Vibrio salmonicida (strain LFI1238)).